A 184-amino-acid polypeptide reads, in one-letter code: dCTP deaminase (184 aa).

107 to 112 (KSTYAR) is a dCTP binding site. Glutamate 133 functions as the Proton donor/acceptor in the catalytic mechanism. The dCTP site is built by glutamine 152, tyrosine 166, and glutamine 176.

Belongs to the dCTP deaminase family. Homotrimer.

It catalyses the reaction dCTP + H2O + H(+) = dUTP + NH4(+). The protein operates within pyrimidine metabolism; dUMP biosynthesis; dUMP from dCTP (dUTP route): step 1/2. Functionally, catalyzes the deamination of dCTP to dUTP. This Acidiphilium cryptum (strain JF-5) protein is dCTP deaminase.